Reading from the N-terminus, the 202-residue chain is Putative 3-methyladenine DNA glycosylase (202 aa).

Belongs to the DNA glycosylase MPG family.

The chain is Putative 3-methyladenine DNA glycosylase from Staphylococcus haemolyticus (strain JCSC1435).